Here is a 407-residue protein sequence, read N- to C-terminus: Endo-1,4-beta-xylanase (407 aa).

Residues 1–28 form the signal peptide; the sequence is MRNVVRKPLTIGLALTLLLPMGMTATSA. The GH10 domain maps to 42–406; that stretch reads ALNAPQLDQR…KPAYWAIIDH (365 aa). The active-site Proton donor is the Glu-187. Glu-293 (nucleophile) is an active-site residue.

This sequence belongs to the glycosyl hydrolase 10 (cellulase F) family.

It is found in the secreted. It carries out the reaction Endohydrolysis of (1-&gt;4)-beta-D-xylosidic linkages in xylans.. It participates in glycan degradation; xylan degradation. This chain is Endo-1,4-beta-xylanase, found in Geobacillus stearothermophilus (Bacillus stearothermophilus).